The sequence spans 146 residues: Large ribosomal subunit protein uL24 (146 aa).

A disordered region spans residues 1–33 (MKYNPRVTSSRRRNRKPHFTASSSERRVXMSSP). Residues 9–18 (SSRRRNRKPH) are compositionally biased toward basic residues.

It belongs to the universal ribosomal protein uL24 family.

The protein is Large ribosomal subunit protein uL24 (RPL26) of Brassica campestris (Field mustard).